The sequence spans 372 residues: Flap endonuclease 1 (372 aa).

The tract at residues 1-105 (MGVKGLNQLI…GELEKRLLRR (105 aa)) is N-domain. Position 34 (Asp-34) interacts with Mg(2+). DNA contacts are provided by Arg-47 and Arg-71. Mg(2+) is bound by residues Asp-87, Glu-159, Glu-161, Asp-180, and Asp-182. The segment at 123 to 254 (EVLKFEKRLV…ATAFKLIKEH (132 aa)) is I-domain. Glu-159 provides a ligand contact to DNA. Gly-232 and Asp-234 together coordinate DNA. Position 234 (Asp-234) interacts with Mg(2+). The interval 339–347 (VQGRLDGFF) is interaction with PCNA. Basic and acidic residues predominate over residues 353 to 366 (DDKKRKADPKESKA). Residues 353-372 (DDKKRKADPKESKASKKKKK) form a disordered region.

Belongs to the XPG/RAD2 endonuclease family. FEN1 subfamily. In terms of assembly, interacts with PCNA. Three molecules of RAD27 bind to one PCNA trimer with each molecule binding to one PCNA monomer. PCNA stimulates the nuclease activity without altering cleavage specificity. The cofactor is Mg(2+). Post-translationally, phosphorylated. Phosphorylation upon DNA damage induces relocalization to the nuclear plasma.

Its subcellular location is the nucleus. The protein resides in the nucleolus. The protein localises to the nucleoplasm. It is found in the mitochondrion. Structure-specific nuclease with 5'-flap endonuclease and 5'-3' exonuclease activities involved in DNA replication and repair. During DNA replication, cleaves the 5'-overhanging flap structure that is generated by displacement synthesis when DNA polymerase encounters the 5'-end of a downstream Okazaki fragment. It enters the flap from the 5'-end and then tracks to cleave the flap base, leaving a nick for ligation. Also involved in the long patch base excision repair (LP-BER) pathway, by cleaving within the apurinic/apyrimidinic (AP) site-terminated flap. Acts as a genome stabilization factor that prevents flaps from equilibrating into structures that lead to duplications and deletions. Also possesses 5'-3' exonuclease activity on nicked or gapped double-stranded DNA, and exhibits RNase H activity. Also involved in replication and repair of rDNA and in repairing mitochondrial DNA. The protein is Flap endonuclease 1 of Candida albicans (strain WO-1) (Yeast).